The primary structure comprises 102 residues: Urease subunit beta (102 aa).

This sequence belongs to the urease beta subunit family. As to quaternary structure, heterotrimer of UreA (gamma), UreB (beta) and UreC (alpha) subunits. Three heterotrimers associate to form the active enzyme.

It is found in the cytoplasm. It catalyses the reaction urea + 2 H2O + H(+) = hydrogencarbonate + 2 NH4(+). It functions in the pathway nitrogen metabolism; urea degradation; CO(2) and NH(3) from urea (urease route): step 1/1. The chain is Urease subunit beta from Acinetobacter baylyi (strain ATCC 33305 / BD413 / ADP1).